Consider the following 156-residue polypeptide: Small ribosomal subunit protein uS7 (156 aa).

This sequence belongs to the universal ribosomal protein uS7 family. As to quaternary structure, part of the 30S ribosomal subunit. Contacts proteins S9 and S11.

One of the primary rRNA binding proteins, it binds directly to 16S rRNA where it nucleates assembly of the head domain of the 30S subunit. Is located at the subunit interface close to the decoding center, probably blocks exit of the E-site tRNA. The polypeptide is Small ribosomal subunit protein uS7 (Lactobacillus helveticus (strain DPC 4571)).